Consider the following 343-residue polypeptide: tRNA N6-adenosine threonylcarbamoyltransferase (343 aa).

Fe cation is bound by residues His-116 and His-120. Residues 139–143, Asp-172, Gly-185, Asp-189, and Asn-280 each bind substrate; that span reads TVSGG. Residue Asp-308 participates in Fe cation binding.

This sequence belongs to the KAE1 / TsaD family. Fe(2+) serves as cofactor.

The protein localises to the cytoplasm. The catalysed reaction is L-threonylcarbamoyladenylate + adenosine(37) in tRNA = N(6)-L-threonylcarbamoyladenosine(37) in tRNA + AMP + H(+). Its function is as follows. Required for the formation of a threonylcarbamoyl group on adenosine at position 37 (t(6)A37) in tRNAs that read codons beginning with adenine. Is involved in the transfer of the threonylcarbamoyl moiety of threonylcarbamoyl-AMP (TC-AMP) to the N6 group of A37, together with TsaE and TsaB. TsaD likely plays a direct catalytic role in this reaction. The polypeptide is tRNA N6-adenosine threonylcarbamoyltransferase (Cytophaga hutchinsonii (strain ATCC 33406 / DSM 1761 / CIP 103989 / NBRC 15051 / NCIMB 9469 / D465)).